The following is a 249-amino-acid chain: Coproheme decarboxylase (249 aa).

Y145 is an active-site residue. Residues 145–149 (YPMAR) and H172 contribute to the Fe-coproporphyrin III site.

It belongs to the ChdC family. Type 1 subfamily. The cofactor is Fe-coproporphyrin III.

The enzyme catalyses Fe-coproporphyrin III + 2 H2O2 + 2 H(+) = heme b + 2 CO2 + 4 H2O. It carries out the reaction Fe-coproporphyrin III + H2O2 + H(+) = harderoheme III + CO2 + 2 H2O. The catalysed reaction is harderoheme III + H2O2 + H(+) = heme b + CO2 + 2 H2O. It functions in the pathway porphyrin-containing compound metabolism; protoheme biosynthesis. Involved in coproporphyrin-dependent heme b biosynthesis. Catalyzes the decarboxylation of Fe-coproporphyrin III (coproheme) to heme b (protoheme IX), the last step of the pathway. The reaction occurs in a stepwise manner with a three-propionate intermediate. The chain is Coproheme decarboxylase from Oceanobacillus iheyensis (strain DSM 14371 / CIP 107618 / JCM 11309 / KCTC 3954 / HTE831).